The sequence spans 122 residues: Ribonuclease P protein component (122 aa).

The protein belongs to the RnpA family. As to quaternary structure, consists of a catalytic RNA component (M1 or rnpB) and a protein subunit.

It carries out the reaction Endonucleolytic cleavage of RNA, removing 5'-extranucleotides from tRNA precursor.. In terms of biological role, RNaseP catalyzes the removal of the 5'-leader sequence from pre-tRNA to produce the mature 5'-terminus. It can also cleave other RNA substrates such as 4.5S RNA. The protein component plays an auxiliary but essential role in vivo by binding to the 5'-leader sequence and broadening the substrate specificity of the ribozyme. This chain is Ribonuclease P protein component, found in Lactobacillus helveticus (strain DPC 4571).